The chain runs to 212 residues: Pyrrolidone-carboxylate peptidase (212 aa).

Residues E78, C141, and H165 contribute to the active site.

The protein belongs to the peptidase C15 family. As to quaternary structure, homotetramer.

Its subcellular location is the cytoplasm. It carries out the reaction Release of an N-terminal pyroglutamyl group from a polypeptide, the second amino acid generally not being Pro.. In terms of biological role, removes 5-oxoproline from various penultimate amino acid residues except L-proline. The protein is Pyrrolidone-carboxylate peptidase (pcp) of Staphylococcus aureus.